The sequence spans 430 residues: 3-phosphoshikimate 1-carboxyvinyltransferase (430 aa).

Residues K20, S21, and R25 each coordinate 3-phosphoshikimate. Residue K20 coordinates phosphoenolpyruvate. Residues G92 and R120 each coordinate phosphoenolpyruvate. Residues S166, Q168, D312, and K339 each contribute to the 3-phosphoshikimate site. Position 168 (Q168) interacts with phosphoenolpyruvate. Catalysis depends on D312, which acts as the Proton acceptor. Residues R343 and R387 each coordinate phosphoenolpyruvate.

Belongs to the EPSP synthase family. As to quaternary structure, monomer.

It localises to the cytoplasm. It catalyses the reaction 3-phosphoshikimate + phosphoenolpyruvate = 5-O-(1-carboxyvinyl)-3-phosphoshikimate + phosphate. Its pathway is metabolic intermediate biosynthesis; chorismate biosynthesis; chorismate from D-erythrose 4-phosphate and phosphoenolpyruvate: step 6/7. Catalyzes the transfer of the enolpyruvyl moiety of phosphoenolpyruvate (PEP) to the 5-hydroxyl of shikimate-3-phosphate (S3P) to produce enolpyruvyl shikimate-3-phosphate and inorganic phosphate. The polypeptide is 3-phosphoshikimate 1-carboxyvinyltransferase (Lactococcus lactis subsp. cremoris (strain SK11)).